The sequence spans 323 residues: Serpentine receptor class gamma-5 (323 aa).

7 consecutive transmembrane segments (helical) span residues Gln31 to Phe51, Phe63 to Ile83, Tyr98 to Tyr117, Ile151 to Ile171, Trp193 to Phe213, Ala245 to Ala265, and Phe272 to Ile292.

Belongs to the nematode receptor-like protein srg family.

The protein resides in the membrane. The chain is Serpentine receptor class gamma-5 (srg-5) from Caenorhabditis elegans.